We begin with the raw amino-acid sequence, 267 residues long: Low affinity immunoglobulin gamma Fc region receptor III (267 aa).

The N-terminal stretch at 1–36 (MTLETQMFQNAHSGSQWLLPPLTMLLLFAFADRQTA) is a signal peptide. Residues 37–221 (NLPKAVVKRD…STSSLVWFHA (185 aa)) are Extracellular-facing. 2 Ig-like C2-type domains span residues 39 to 121 (PKAV…EVIS) and 122 to 204 (DWLL…VTIT). 2 disulfide bridges follow: C62/C104 and C143/C187. Residues N70, N78, N97, N171, and N178 are each glycosylated (N-linked (GlcNAc...) asparagine). A helical membrane pass occupies residues 222–241 (AFCLVMCLLFAVDTGLYFCV). The Cytoplasmic portion of the chain corresponds to 242–267 (RRNLQTSGEDWRKSLSVGKYKAPQDK).

As to quaternary structure, may form multisubunit complex with other heteroproteins. This association is required for efficient cell-surface expression. Does not associate with CD3 zeta. In terms of tissue distribution, expressed on natural killer cells and macrophages.

It is found in the cell membrane. Receptor for the Fc region of complexed immunoglobulins gamma. Low affinity receptor which binds to IgG1, IgG2a and IgG2b. Mediates neutrophil activation by IgG complexes redundantly with Fcgr4. The polypeptide is Low affinity immunoglobulin gamma Fc region receptor III (Fcgr3) (Rattus norvegicus (Rat)).